The following is a 512-amino-acid chain: GMP synthase [glutamine-hydrolyzing] (512 aa).

In terms of domain architecture, Glutamine amidotransferase type-1 spans 7-197; it reads TIIVLDFGSQ…VFGVCGCSEG (191 aa). Cys-84 acts as the Nucleophile in catalysis. Residues His-171 and Glu-173 contribute to the active site. The 190-residue stretch at 198-387 folds into the GMPS ATP-PPase domain; sequence WNMENFIEVE…LGIPDEIVWR (190 aa). 225–231 lines the ATP pocket; the sequence is SGGVDSS.

Homodimer.

The enzyme catalyses XMP + L-glutamine + ATP + H2O = GMP + L-glutamate + AMP + diphosphate + 2 H(+). It functions in the pathway purine metabolism; GMP biosynthesis; GMP from XMP (L-Gln route): step 1/1. Catalyzes the synthesis of GMP from XMP. This Bacillus cereus (strain G9842) protein is GMP synthase [glutamine-hydrolyzing].